Here is a 227-residue protein sequence, read N- to C-terminus: Orotidine 5'-phosphate decarboxylase (227 aa).

Substrate-binding positions include Asp12, Lys34, 61-70 (DLKLHDIPNT), Thr117, Arg178, Gln187, Gly207, and Arg208. The active-site Proton donor is Lys63.

It belongs to the OMP decarboxylase family. Type 1 subfamily. In terms of assembly, homodimer.

It catalyses the reaction orotidine 5'-phosphate + H(+) = UMP + CO2. Its pathway is pyrimidine metabolism; UMP biosynthesis via de novo pathway; UMP from orotate: step 2/2. Catalyzes the decarboxylation of orotidine 5'-monophosphate (OMP) to uridine 5'-monophosphate (UMP). The chain is Orotidine 5'-phosphate decarboxylase from Anaeromyxobacter dehalogenans (strain 2CP-1 / ATCC BAA-258).